Reading from the N-terminus, the 500-residue chain is Kynurenine 3-monooxygenase acdD (500 aa).

FAD-binding positions include Val-17 and 36-38; that span reads ELR. N-linked (GlcNAc...) asparagine glycosylation occurs at Asn-50. Ala-58 serves as a coordination point for FAD. Residues Arg-89 and Tyr-106 each coordinate L-kynurenine. Residues Arg-118 and Leu-143 each coordinate FAD. Asn-163 carries an N-linked (GlcNAc...) asparagine glycan. FAD is bound by residues Asp-321 and 332–335; that span reads QGLN. Positions 392 and 428 each coordinate L-kynurenine. The helical transmembrane segment at 451-471 threads the bilayer; sequence LLLYGSISAIISSAAIVGVLA.

It belongs to the aromatic-ring hydroxylase family. KMO subfamily. It depends on FAD as a cofactor.

The protein localises to the mitochondrion outer membrane. It carries out the reaction L-kynurenine + NADPH + O2 + H(+) = 3-hydroxy-L-kynurenine + NADP(+) + H2O. Its pathway is secondary metabolite biosynthesis. It functions in the pathway cofactor biosynthesis; NAD(+) biosynthesis; quinolinate from L-kynurenine: step 1/3. Its function is as follows. Indoleamine 2,3-dioxygenase; part of the gene cluster that mediates the biosynthesis of aspcandine, a pyrrolobenzazepine alkaloid. Initially, the indoleamine 2,3-dioxygenase acdA accepts L-tryptophan and performs the oxidative opening of the indole ring to yield N'-formyl-L-kynurenine, which undergoes the spontaneous deformylation reaction to provide L-kynurenine. The kynurenine 3-monooxygenase acdD then hydroxylates L-kynurenine to afford 3-hydroxy-L-kynurenine. 3-hydroxy-L-kynurenine is activated by the A domain of the NRPS-PKS acdB and subsequently loaded onto the enzyme. The KS domain conducts the decarboxylative condensation of the 3-hydroxy-L-kynurenyl and malonyl moieties, and subsequent nucleophilic attacks by the two amino groups would occur nonenzymatically at two distinct positions, achieving the chain release and the construction of the tricyclic system. Finally, the dehydration reaction completes the biosynthesis to yield aspcandine. The chain is Kynurenine 3-monooxygenase acdD from Aspergillus candidus.